Here is a 328-residue protein sequence, read N- to C-terminus: PLASTID TRANSCRIPTIONALLY ACTIVE protein 6, chloroplastic (328 aa).

Residues 1–14 (MASSAASPSLSLLS) show a composition bias toward low complexity. Residues 1-21 (MASSAASPSLSLLSFTSKPPY) are disordered. The N-terminal 59 residues, 1-59 (MASSAASPSLSLLSFTSKPPYPSGSQRLFASFRTDGLFAPLTLKSRRGRGIVVKVDDVD), are a transit peptide targeting the chloroplast. The Nuclear localization signal signature appears at 267–275 (RKRDRKDDL). Positions 301–319 (EREEWTKTREDMEKHLRKL) match the RNA binding domain motif.

In terms of assembly, subunit of the plastid-encoded RNA polymerase (PEP) complex. Component of a large nuclear subcomplex that may include other PEP subunits (e.g. PTAC12/HMR/PAP5, PTAC14/PAP7 and PTAC7/PAP12). Binds directly to PTAC12/HMR/PAP5 in the nucleus. Interacts with MTERF5. Mostly expressed in rosette leaves, stems and flowers, and, to a lower extent, in roots and cauline leaves.

It is found in the plastid. Its subcellular location is the chloroplast. The protein localises to the chloroplast thylakoid. It localises to the nucleus. The protein resides in the nucleoplasm. In terms of biological role, essential protein involved in plastid gene expression and in chloroplast biogenesis. Links photomorphogenesis and chloroplast biogenesis through its dual localization; required for the formation of late photobodies in the nucleus, as well as for phytochrome B-mediated signaling cascade and subsequent reshaping of the plastid-encoded RNA polymerase (PEP) activity. Binds RNA via specific recognition motifs of viral origin. Recruited by MTERF5 to the transcriptionally paused region of psbEFLJ. Promotes leaf greening. This is PLASTID TRANSCRIPTIONALLY ACTIVE protein 6, chloroplastic from Arabidopsis thaliana (Mouse-ear cress).